The following is a 479-amino-acid chain: Anaerobic nitric oxide reductase flavorubredoxin (479 aa).

Residues 30–210 (LRGSSYNSYL…PFSRLVTPKI (181 aa)) are zinc metallo-hydrolase. Residues H79, E81, D83, H147, D166, and H227 each coordinate Fe cation. The Flavodoxin-like domain maps to 254–393 (ITIFYDTMSN…LCRQHGRDIA (140 aa)). FMN is bound by residues 260-264 (TMSNN) and 342-369 (AFGSHGWSGGAVDRLSTRLQDAGFEMSL). The region spanning 423 to 474 (GPKMQCSVCQWIYDPALGEPLQDVAPGTPWSEVPDNFLCPECSLGKDVFDVL) is the Rubredoxin-like domain. Fe cation-binding residues include C428, C431, C461, and C464.

This sequence in the N-terminal section; belongs to the zinc metallo-hydrolase group 3 family. Homotetramer. It depends on Fe cation as a cofactor. The cofactor is FMN.

The protein localises to the cytoplasm. It participates in nitrogen metabolism; nitric oxide reduction. Its function is as follows. Anaerobic nitric oxide reductase; uses NADH to detoxify nitric oxide (NO), protecting several 4Fe-4S NO-sensitive enzymes. Has at least 2 reductase partners, only one of which (NorW, flavorubredoxin reductase) has been identified. NO probably binds to the di-iron center; electrons enter from the NorW at rubredoxin and are transferred sequentially to the FMN center and the di-iron center. Also able to function as an aerobic oxygen reductase. This Salmonella paratyphi A (strain ATCC 9150 / SARB42) protein is Anaerobic nitric oxide reductase flavorubredoxin.